Reading from the N-terminus, the 115-residue chain is Guanylin (115 aa).

Residues 1-21 form the signal peptide; sequence MNACVLSVLCLLGAVAVLVEG. Positions 22-100 are excised as a propeptide; the sequence is VTVQDGDLSF…LQRLEAIAQD (79 aa). Intrachain disulfides connect Cys-69–Cys-82, Cys-104–Cys-112, and Cys-107–Cys-115.

This sequence belongs to the guanylin family.

Its subcellular location is the secreted. Its function is as follows. Endogenous activator of intestinal guanylate cyclase. It stimulates this enzyme through the same receptor binding region as the heat-stable enterotoxins. In Notomys alexis (Spinifex hopping mouse), this protein is Guanylin (GUCA2A).